The primary structure comprises 301 residues: MPIKVQNDLPAKKILEEENIFMMDEKRAMHQDIRPLKIAILNLMPLKEDTEVQLLRSLSNTPLQVDITFLTTDTYVGKNTATSHLEQFYLTHEDVKNRRFDGLIITGAPVEQMEFEEVAYWNELKKIMEWSKTHVTSTLHLCWGAQAGLYYHYGIKKYPLPDKMFGIFEHKLLNRKEPLVRGFDDVFLAPHSRHTETSREEILQNSDLTILAESEEAGVLIVMGGDGKHIFVMGHPEYDRITLDNEYKRDVNKGLEIQLPKNYYPSDDSMQRPNLSWRAHANALYTNWLNYYVYQVTPYEL.

The Acyl-thioester intermediate role is filled by C142. Residues K163 and S192 each coordinate substrate. Catalysis depends on H235, which acts as the Proton acceptor. Residue E237 is part of the active site. Substrate is bound at residue R249.

This sequence belongs to the MetA family.

The protein localises to the cytoplasm. It catalyses the reaction L-homoserine + acetyl-CoA = O-acetyl-L-homoserine + CoA. The protein operates within amino-acid biosynthesis; L-methionine biosynthesis via de novo pathway; O-acetyl-L-homoserine from L-homoserine: step 1/1. Transfers an acetyl group from acetyl-CoA to L-homoserine, forming acetyl-L-homoserine. The sequence is that of Homoserine O-acetyltransferase from Lachnoclostridium phytofermentans (strain ATCC 700394 / DSM 18823 / ISDg) (Clostridium phytofermentans).